The chain runs to 531 residues: Na(+)/H(+) antiporter NhaB (531 aa).

Transmembrane regions (helical) follow at residues 23 to 45 (IAIL…VAGW), 66 to 86 (PGGL…SQVL), 97 to 117 (LLLI…LFVF), 130 to 164 (VSLM…FYSI), 206 to 226 (LLMH…VGEP), 244 to 264 (LRMG…CFLV), 307 to 327 (AFVG…VGLI), 352 to 372 (EEAL…GVII), 393 to 413 (LVIF…VFVG), 451 to 471 (ATPN…APLI), and 478 to 498 (MVWM…LAIE).

Belongs to the NhaB Na(+)/H(+) (TC 2.A.34) antiporter family.

Its subcellular location is the cell inner membrane. It carries out the reaction 2 Na(+)(in) + 3 H(+)(out) = 2 Na(+)(out) + 3 H(+)(in). Its function is as follows. Na(+)/H(+) antiporter that extrudes sodium in exchange for external protons. This Shewanella loihica (strain ATCC BAA-1088 / PV-4) protein is Na(+)/H(+) antiporter NhaB.